The sequence spans 570 residues: Urease subunit alpha 1 (570 aa).

In terms of domain architecture, Urease spans glycine 131–phenylalanine 570. 3 residues coordinate Ni(2+): histidine 136, histidine 138, and lysine 219. Lysine 219 is subject to N6-carboxylysine. Histidine 221 serves as a coordination point for substrate. Residues histidine 248 and histidine 274 each coordinate Ni(2+). The active-site Proton donor is histidine 322. Aspartate 362 contributes to the Ni(2+) binding site.

It belongs to the metallo-dependent hydrolases superfamily. Urease alpha subunit family. Heterotrimer of UreA (gamma), UreB (beta) and UreC (alpha) subunits. Three heterotrimers associate to form the active enzyme. Requires Ni cation as cofactor. Carboxylation allows a single lysine to coordinate two nickel ions.

It localises to the cytoplasm. It carries out the reaction urea + 2 H2O + H(+) = hydrogencarbonate + 2 NH4(+). Its pathway is nitrogen metabolism; urea degradation; CO(2) and NH(3) from urea (urease route): step 1/1. In terms of biological role, may protect brucellae during their passage through the stomach. The major route of infection in human brucellosis is oral. This Brucella abortus (strain 2308) protein is Urease subunit alpha 1.